Reading from the N-terminus, the 51-residue chain is Putative protein LomR (51 aa).

This sequence belongs to the outer membrane OOP (TC 1.B.6) superfamily. Ail family.

In Escherichia coli (strain K12), this protein is Putative protein LomR (lomR).